Here is a 204-residue protein sequence, read N- to C-terminus: Minor allergen Cla h 7 (204 aa).

Positions 5-195 constitute a Flavodoxin-like domain; sequence IAIIFYSTWG…ELTAQGKAFY (191 aa).

It belongs to the WrbA family.

Its subcellular location is the cytoplasm. The chain is Minor allergen Cla h 7 (CLAH7) from Davidiella tassiana (Mycosphaerella tassiana).